A 159-amino-acid polypeptide reads, in one-letter code: Phosphopantetheine adenylyltransferase (159 aa).

Thr-10 serves as a coordination point for substrate. ATP contacts are provided by residues 10–11 (TF) and His-18. Lys-42, Met-74, and Arg-88 together coordinate substrate. ATP-binding positions include 89 to 91 (GLR), Glu-99, and 124 to 130 (WSFISSS).

This sequence belongs to the bacterial CoaD family. Homohexamer. Mg(2+) serves as cofactor.

It localises to the cytoplasm. It carries out the reaction (R)-4'-phosphopantetheine + ATP + H(+) = 3'-dephospho-CoA + diphosphate. It participates in cofactor biosynthesis; coenzyme A biosynthesis; CoA from (R)-pantothenate: step 4/5. Its function is as follows. Reversibly transfers an adenylyl group from ATP to 4'-phosphopantetheine, yielding dephospho-CoA (dPCoA) and pyrophosphate. The protein is Phosphopantetheine adenylyltransferase of Yersinia pestis.